The following is a 1394-amino-acid chain: ATP-dependent permease AUS1 (1394 aa).

The Cytoplasmic segment spans residues Met1–Arg420. Residues Lys33–Asp273 enclose the ABC transporter 1 domain. 6 consecutive transmembrane segments (helical) span residues Gly421–Phe443, Thr468–Ala490, Ala497–Leu519, Val529–Leu551, Phe558–Leu575, and Val636–Ser658. Residues Gln659 to Thr1080 are Cytoplasmic-facing. The ABC transporter 2 domain maps to Ile751–Val978. Gly782–Thr789 provides a ligand contact to ATP. 6 consecutive transmembrane segments (helical) span residues Tyr1081 to Ile1103, Ile1107 to Asn1129, Val1156 to Val1178, Ala1193 to Ile1215, Ala1224 to Ser1246, and Phe1346 to Tyr1368. The Cytoplasmic portion of the chain corresponds to Val1369–Asn1394.

Belongs to the ABC transporter superfamily. ABCG family. PDR (TC 3.A.1.205) subfamily.

Its subcellular location is the membrane. Transporter involved in the uptake of sterol. The polypeptide is ATP-dependent permease AUS1 (AUS1) (Saccharomyces cerevisiae (strain ATCC 204508 / S288c) (Baker's yeast)).